A 128-amino-acid chain; its full sequence is Putative protein SEM1, isoform 2 (128 aa).

Residues 22–32 are compositionally biased toward basic residues; the sequence is KHGIKRGRRPS. The tract at residues 22 to 42 is disordered; it reads KHGIKRGRRPSIRSPAQRARG.

The polypeptide is Putative protein SEM1, isoform 2 (Homo sapiens (Human)).